We begin with the raw amino-acid sequence, 409 residues long: Argininosuccinate synthase (409 aa).

ATP-binding positions include 11–19 and Ala-38; that span reads AYSGGLDTS. L-citrulline is bound by residues Tyr-91 and Ser-96. Gly-121 is an ATP binding site. Thr-123, Asn-127, and Asp-128 together coordinate L-aspartate. Asn-127 serves as a coordination point for L-citrulline. Residues Arg-131, Ser-182, Ser-191, Glu-267, and Tyr-279 each coordinate L-citrulline.

This sequence belongs to the argininosuccinate synthase family. Type 1 subfamily. Homotetramer.

The protein localises to the cytoplasm. It catalyses the reaction L-citrulline + L-aspartate + ATP = 2-(N(omega)-L-arginino)succinate + AMP + diphosphate + H(+). It functions in the pathway amino-acid biosynthesis; L-arginine biosynthesis; L-arginine from L-ornithine and carbamoyl phosphate: step 2/3. The polypeptide is Argininosuccinate synthase (Nitrobacter hamburgensis (strain DSM 10229 / NCIMB 13809 / X14)).